Consider the following 246-residue polypeptide: Large ribosomal subunit protein uL3 (246 aa).

2 disordered regions span residues 140–162 (SHRS…NKKM) and 214–246 (ADVP…EENA). At Gln-151 the chain carries N5-methylglutamine. Residues 234 to 246 (EAAPEAPASEENA) are compositionally biased toward low complexity.

Belongs to the universal ribosomal protein uL3 family. As to quaternary structure, part of the 50S ribosomal subunit. Forms a cluster with proteins L14 and L19. Methylated by PrmB.

In terms of biological role, one of the primary rRNA binding proteins, it binds directly near the 3'-end of the 23S rRNA, where it nucleates assembly of the 50S subunit. The sequence is that of Large ribosomal subunit protein uL3 from Methylorubrum extorquens (strain CM4 / NCIMB 13688) (Methylobacterium extorquens).